A 336-amino-acid polypeptide reads, in one-letter code: Retinol dehydrogenase 10-B (336 aa).

Residues 7–27 form a helical; Signal-anchor membrane-spanning segment; sequence LFVVTFKIIWSFVLAGAKWFI. Position 40–64 (40–64) interacts with NADP(+); it reads VITGAGSGLGRLFALEFARRRATLV. S192 lines the substrate pocket. Catalysis depends on Y205, which acts as the Proton acceptor.

It belongs to the short-chain dehydrogenases/reductases (SDR) family.

The protein localises to the microsome membrane. It is found in the endoplasmic reticulum membrane. It carries out the reaction all-trans-retinol + NADP(+) = all-trans-retinal + NADPH + H(+). It participates in cofactor metabolism; retinol metabolism. Its function is as follows. Retinol dehydrogenase with a clear preference for NADP. Converts all-trans-retinol to all-trans-retinal. Has no detectable activity towards 11-cis-retinol, 9-cis-retinol and 13-cis-retinol. This Danio rerio (Zebrafish) protein is Retinol dehydrogenase 10-B (rdh10b).